Reading from the N-terminus, the 267-residue chain is Probable 6-oxopurine nucleoside phosphorylase (267 aa).

Phosphate contacts are provided by residues Ser-10, Arg-50 to His-51, and Ser-83 to Ala-84. Met-188 serves as a coordination point for substrate. Thr-189 provides a ligand contact to phosphate. Asn-212–Ala-214 is a binding site for substrate.

The protein belongs to the PNP/MTAP phosphorylase family. MTAP subfamily. As to quaternary structure, homohexamer. Dimer of a homotrimer.

It carries out the reaction a purine D-ribonucleoside + phosphate = a purine nucleobase + alpha-D-ribose 1-phosphate. The enzyme catalyses guanosine + phosphate = alpha-D-ribose 1-phosphate + guanine. It catalyses the reaction inosine + phosphate = alpha-D-ribose 1-phosphate + hypoxanthine. It functions in the pathway purine metabolism; purine nucleoside salvage. Its function is as follows. Purine nucleoside phosphorylase which is highly specific for 6-oxopurine nucleosides. Cleaves guanosine or inosine to respective bases and sugar-1-phosphate molecules. Involved in purine salvage. The chain is Probable 6-oxopurine nucleoside phosphorylase from Thermococcus kodakarensis (strain ATCC BAA-918 / JCM 12380 / KOD1) (Pyrococcus kodakaraensis (strain KOD1)).